The following is a 184-amino-acid chain: Rubrerythrin-2 (184 aa).

A Ferritin-like diiron domain is found at 2-146; that stretch reads SVKNAMTADF…DAQDSAKENK (145 aa). Fe(3+) contacts are provided by E19, E52, E94, E97, E128, H131, C156, C159, C171, and C174. Residues 151–184 enclose the Rubredoxin-like domain; the sequence is GKVYICPVCGFTTLDENIEQCPICGVKKDKFQAF.

Fe(3+) is required as a cofactor.

It carries out the reaction H2O2 + NADH + H(+) = NAD(+) + 2 H2O. With respect to regulation, rubredoxin (Rd) increases the NADH consumption rate by serving as an intermediary electron-transfer shuttle between NROR and Rbr2. Functions as the terminal component of an NADH peroxidase (NADH:H(2)O(2) oxidoreductase) when using NADH:rubredoxin oxidoreductase (NROR) as the electron transport intermediary from NADH to Rbr2. This chain is Rubrerythrin-2 (rbr2), found in Clostridium acetobutylicum (strain ATCC 824 / DSM 792 / JCM 1419 / IAM 19013 / LMG 5710 / NBRC 13948 / NRRL B-527 / VKM B-1787 / 2291 / W).